Here is a 167-residue protein sequence, read N- to C-terminus: Ureidoglycolate lyase (167 aa).

The protein belongs to the ureidoglycolate lyase family. As to quaternary structure, homodimer. Ni(2+) is required as a cofactor.

It carries out the reaction (S)-ureidoglycolate = urea + glyoxylate. It functions in the pathway nitrogen metabolism; (S)-allantoin degradation. In terms of biological role, catalyzes the catabolism of the allantoin degradation intermediate (S)-ureidoglycolate, generating urea and glyoxylate. Involved in the utilization of allantoin as nitrogen source. In Pseudomonas putida (strain ATCC 700007 / DSM 6899 / JCM 31910 / BCRC 17059 / LMG 24140 / F1), this protein is Ureidoglycolate lyase.